A 144-amino-acid polypeptide reads, in one-letter code: MKTFSPKPEHISHQWFLVDAHNKILGRLAAQIAHRLRGKHKPEFAPHIDNGDYIVVVNCEQIKVTGNKQEQKKYYRHSGYVGGLKETTLKTLLEKKPAEVLIHAVRGMLPKNRLGRAMLKKLKVYAGPEHQHIAQQPIPLSLPY.

This sequence belongs to the universal ribosomal protein uL13 family. Part of the 50S ribosomal subunit.

Its function is as follows. This protein is one of the early assembly proteins of the 50S ribosomal subunit, although it is not seen to bind rRNA by itself. It is important during the early stages of 50S assembly. This Lawsonia intracellularis (strain PHE/MN1-00) protein is Large ribosomal subunit protein uL13.